Consider the following 829-residue polypeptide: MDSWFILVLFGSGLIHVSANNATTVSPSLGTTRLIKTSTTELAKEENKTSNSTSSVISLSVAPTFSPNLTLEPTYVTTVNSSHSDNGTRRAASTESGGTTISPNGSWLIENQFTDAITEPWEGNSSTAATTPETFPPADETPIIAVMVALSSLLVIVFIIIVLYMLRFKKYKQAGSHSNSFRLSNGRTEDVEPQSVPLLARSPSTNRKYPPLPVDKLEEEINRRMADDNKLFREEFNALPACPIQATCEAASKEENKEKNRYVNILPFLSLAVSKDAVKALNKTTPLLERRFIGKSNSRGCLSDDHSRVHLTPVEGVPDSDYINASFINGYQEKNKFIAAQGPKEETVNDFWRMIWEQNTATIVMVTNLKERKECKCAQYWPDQGCWTYGNVRVSVEDVTVLVDYTVRKFCIQQVGDVTNRKPQRLITQFHFTSWPDFGVPFTPIGMLKFLKKVKACNPQYAGAIVVHCSAGVGRTGTFVVIDAMLDMMHSERKVDVYGFVSRIRAQRCQMVQTDMQYVFIYQALLEHYLYGDTELEVTSLETHLQKIYNKIPGTSNNGLEEEFKKLTSIKIQNDKMRTGNLPANMKKNRVLQIIPYEFNRVIIPVKRGEENTDYVNASFIDGYRQKDSYIASQGPLLHTIEDFWRMIWEWKSCSIVMLTELEERGQEKCAQYWPSDGLVSYGDITVELKKEEECESYTVRDLLVTNTRENKSRQIRQFHFHGWPEVGIPSDGKGMINIIAAVQKQQQQSGNHPITVHCSAGAGRTGTFCALSTVLERVKAEGILDVFQTVKSLRLQRPHMVQTLEQYEFCYKVVQEYIDAFSDYANFK.

Positions 1-19 (MDSWFILVLFGSGLIHVSA) are cleaved as a signal peptide. Topologically, residues 20–142 (NNATTVSPSL…ETFPPADETP (123 aa)) are extracellular. N-linked (GlcNAc...) asparagine glycans are attached at residues Asn21, Asn47, Asn51, Asn68, Asn80, Asn86, Asn104, and Asn124. Positions 79–106 (VNSSHSDNGTRRAASTESGGTTISPNGS) are disordered. Residues 143–166 (IIAVMVALSSLLVIVFIIIVLYML) traverse the membrane as a helical segment. At 167 to 829 (RFKKYKQAGS…DAFSDYANFK (663 aa)) the chain is on the cytoplasmic side. Residues Ser202 and Ser204 each carry the phosphoserine modification. 2 Tyrosine-protein phosphatase domains span residues 232 to 528 (FREE…LLEH) and 560 to 818 (LEEE…VQEY). Residues Asp437, 469-475 (CSAGVGR), and Gln513 contribute to the substrate site. The Phosphocysteine intermediate role is filled by Cys469. The active-site Phosphocysteine intermediate is Cys759. The residue at position 825 (Tyr825) is a Phosphotyrosine.

The protein belongs to the protein-tyrosine phosphatase family. Receptor class 4 subfamily. Part of a complex comprised of PTPRA, BCAR1, BCAR3 (via SH2 domain), and SRC. Within the complex, interacts (when phosphorylated on Tyr-825) with BCAR3 (via SH2 domain). Interacts with GRB2. Integrin binding to extracellular matrix induces phosphorylation at Tyr-825 which induces PTPRA localization and recruitment of BCAR3, BCAR1 and CRK to focal adhesions. In terms of tissue distribution, widely expressed. Highest expression in brain and kidney.

The protein localises to the cell membrane. Its subcellular location is the cell junction. It localises to the focal adhesion. The enzyme catalyses O-phospho-L-tyrosyl-[protein] + H2O = L-tyrosyl-[protein] + phosphate. Its function is as follows. Tyrosine protein phosphatase which is involved in integrin-mediated focal adhesion formation. Following integrin engagement, specifically recruits BCAR3, BCAR1 and CRK to focal adhesions thereby promoting SRC-mediated phosphorylation of BRAC1 and the subsequent activation of PAK and small GTPase RAC1 and CDC42. This is Receptor-type tyrosine-protein phosphatase alpha (Ptpra) from Mus musculus (Mouse).